Reading from the N-terminus, the 320-residue chain is NAC domain-containing protein 18 (320 aa).

The segment at 1–22 is disordered; it reads MESTDSSGGPPPPQPNLPPGFR. Positions 9 to 18 are enriched in pro residues; that stretch reads GPPPPQPNLP. One can recognise an NAC domain in the interval 17–177; the sequence is LPPGFRFHPT…DWVLCRIYKK (161 aa). The DNA-binding element occupies 118–183; it reads VGVKKALVFY…IYKKNNSTAS (66 aa).

As to expression, restricted primarily to the region of the embryo including the SAM. Expressed in the outer integument, but seems not expressed in the embryo at the torpedo stage.

The protein resides in the nucleus. In terms of biological role, may encode a transcription factor involved in the elaboration of shoot apical meristems (SAM). Together with NAC056/NARS1, regulates embryogenesis by regulating the development and degeneration of ovule integuments, a process required for intertissue communication between the embryo and the maternal integument. The sequence is that of NAC domain-containing protein 18 (NAC018) from Arabidopsis thaliana (Mouse-ear cress).